The primary structure comprises 416 residues: Lipid III flippase (416 aa).

The Cytoplasmic portion of the chain corresponds to 1–17; that stretch reads MSLAKASLWTAASTLVK. A helical membrane pass occupies residues 18–38; that stretch reads IGAGLLVGKLLAVSFGPAGLG. The Periplasmic portion of the chain corresponds to 39 to 45; the sequence is LAANFRQ. Residues 46–66 traverse the membrane as a helical segment; sequence LITVLGVLAGAGIFNGVTKYV. Over 67-84 the chain is Cytoplasmic; the sequence is AQYHDNPQQLRRVVGTSS. The helical transmembrane segment at 85 to 105 threads the bilayer; sequence AMVLGFSTLMALVFVLAAAPI. The Periplasmic segment spans residues 106–121; that stretch reads SQGLFGNTDYQGLVRL. The chain crosses the membrane as a helical span at residues 122–142; the sequence is VALVQMGIAWGNLLLALMKGF. At 143 to 144 the chain is on the cytoplasmic side; it reads RD. A helical membrane pass occupies residues 145–165; that stretch reads AAGNALSLIVGSLIGVLAYYV. The Periplasmic segment spans residues 166–174; the sequence is SYRLGGYEG. The helical transmembrane segment at 175–195 threads the bilayer; the sequence is ALLGLALIPALVVIPAAIMLI. Topologically, residues 196-216 are cytoplasmic; it reads KRGVIPLSYLKPSWDNGLAGQ. A helical transmembrane segment spans residues 217–237; that stretch reads LSKFTLMALITSVTLPVAYIM. Topologically, residues 238–259 are periplasmic; that stretch reads MRKLLAAQYSWDEVGIWQGVSS. A helical transmembrane segment spans residues 260-280; sequence ISDAYLQFITASFSVYLLPTL. At 281-302 the chain is on the cytoplasmic side; it reads SRLTEKRDITREVVKSLKFVLP. The helical transmembrane segment at 303-323 threads the bilayer; sequence AVAAASFTVWLLRDFAIWLLL. Topologically, residues 324–334 are periplasmic; the sequence is SNKFTAMRDLF. A helical membrane pass occupies residues 335–355; it reads AWQLVGDVLKVGAYVFGYLVI. Residues 356–370 lie on the Cytoplasmic side of the membrane; sequence AKASLRFYILAEVSQ. A run of 2 helical transmembrane segments spans residues 371–391 and 392–412; these read FTLL…LGAA and QAYM…FLLW. The Cytoplasmic portion of the chain corresponds to 413-416; the sequence is RRRA.

Belongs to the polysaccharide transport (PST) (TC 2.A.66.2) family. Probably part of a complex composed of WzxE, WzyE and WzzE.

The protein resides in the cell inner membrane. Its pathway is bacterial outer membrane biogenesis; enterobacterial common antigen biosynthesis. Its function is as follows. Mediates the transbilayer movement of Und-PP-GlcNAc-ManNAcA-Fuc4NAc (lipid III) from the inner to the outer leaflet of the cytoplasmic membrane during the assembly of enterobacterial common antigen (ECA). Required for the assembly of the phosphoglyceride-linked form of ECA (ECA(PG)) and the water-soluble cyclic form of ECA (ECA(CYC)). Could also mediate the translocation of Und-PP-GlcNAc. In Escherichia coli (strain K12), this protein is Lipid III flippase.